The following is a 305-amino-acid chain: UDP-3-O-acyl-N-acetylglucosamine deacetylase (305 aa).

His-78, His-237, and Asp-241 together coordinate Zn(2+). His-264 functions as the Proton donor in the catalytic mechanism.

This sequence belongs to the LpxC family. The cofactor is Zn(2+).

The enzyme catalyses a UDP-3-O-[(3R)-3-hydroxyacyl]-N-acetyl-alpha-D-glucosamine + H2O = a UDP-3-O-[(3R)-3-hydroxyacyl]-alpha-D-glucosamine + acetate. It participates in glycolipid biosynthesis; lipid IV(A) biosynthesis; lipid IV(A) from (3R)-3-hydroxytetradecanoyl-[acyl-carrier-protein] and UDP-N-acetyl-alpha-D-glucosamine: step 2/6. Its function is as follows. Catalyzes the hydrolysis of UDP-3-O-myristoyl-N-acetylglucosamine to form UDP-3-O-myristoylglucosamine and acetate, the committed step in lipid A biosynthesis. This chain is UDP-3-O-acyl-N-acetylglucosamine deacetylase, found in Burkholderia pseudomallei (strain 668).